A 119-amino-acid chain; its full sequence is Large ribosomal subunit protein bL20 (119 aa).

The protein belongs to the bacterial ribosomal protein bL20 family.

In terms of biological role, binds directly to 23S ribosomal RNA and is necessary for the in vitro assembly process of the 50S ribosomal subunit. It is not involved in the protein synthesizing functions of that subunit. This is Large ribosomal subunit protein bL20 from Bacillus licheniformis (strain ATCC 14580 / DSM 13 / JCM 2505 / CCUG 7422 / NBRC 12200 / NCIMB 9375 / NCTC 10341 / NRRL NRS-1264 / Gibson 46).